Here is a 242-residue protein sequence, read N- to C-terminus: Glutamate transport ATP-binding protein GluA (242 aa).

Residues 2 to 236 (IKMTGVQKYF…PKSDRAKDFL (235 aa)) form the ABC transporter domain. 34–41 (GPSGSGKS) serves as a coordination point for ATP.

This sequence belongs to the ABC transporter superfamily. The complex is composed of two ATP-binding proteins (GluA), two transmembrane proteins (GluC and GluD) and a solute-binding protein (GluB).

It is found in the cell membrane. The enzyme catalyses a polar amino acid(out) + ATP + H2O = a polar amino acid(in) + ADP + phosphate + H(+). It carries out the reaction L-glutamate(out) + ATP + H2O = L-glutamate(in) + ADP + phosphate + H(+). In terms of biological role, part of the ABC transporter complex GluABCD involved in glutamate uptake. Probably responsible for energy coupling to the transport system. The chain is Glutamate transport ATP-binding protein GluA from Corynebacterium glutamicum (strain ATCC 13032 / DSM 20300 / JCM 1318 / BCRC 11384 / CCUG 27702 / LMG 3730 / NBRC 12168 / NCIMB 10025 / NRRL B-2784 / 534).